A 341-amino-acid polypeptide reads, in one-letter code: Retinol dehydrogenase 10 (341 aa).

A helical; Signal-anchor transmembrane segment spans residues 3 to 23; it reads IVLEFFLVTFKVLWAFVLAAA. An NADP(+)-binding site is contributed by 40–64; it reads LITGAGSGLGRLFALEFARRRAQLV. A substrate-binding site is contributed by S197. The Proton acceptor role is filled by Y210.

It belongs to the short-chain dehydrogenases/reductases (SDR) family.

It is found in the microsome membrane. Its subcellular location is the endoplasmic reticulum membrane. The enzyme catalyses all-trans-retinol + NADP(+) = all-trans-retinal + NADPH + H(+). Its pathway is cofactor metabolism; retinol metabolism. In terms of biological role, retinol dehydrogenase with a clear preference for NADP. Converts all-trans-retinol to all-trans-retinal. Has no detectable activity towards 11-cis-retinol, 9-cis-retinol and 13-cis-retinol. This Xenopus tropicalis (Western clawed frog) protein is Retinol dehydrogenase 10 (rdh10).